A 399-amino-acid chain; its full sequence is CCA-adding enzyme (399 aa).

ATP-binding residues include Gly32 and Arg35. CTP contacts are provided by Gly32 and Arg35. Mg(2+) contacts are provided by Asp45 and Asp47. Residues Arg116, Asp159, Arg162, Arg165, and Arg168 each contribute to the ATP site. 5 residues coordinate CTP: Arg116, Asp159, Arg162, Arg165, and Arg168.

This sequence belongs to the tRNA nucleotidyltransferase/poly(A) polymerase family. Bacterial CCA-adding enzyme type 3 subfamily. As to quaternary structure, homodimer. Mg(2+) is required as a cofactor.

The catalysed reaction is a tRNA precursor + 2 CTP + ATP = a tRNA with a 3' CCA end + 3 diphosphate. It carries out the reaction a tRNA with a 3' CCA end + 2 CTP + ATP = a tRNA with a 3' CCACCA end + 3 diphosphate. Catalyzes the addition and repair of the essential 3'-terminal CCA sequence in tRNAs without using a nucleic acid template. Adds these three nucleotides in the order of C, C, and A to the tRNA nucleotide-73, using CTP and ATP as substrates and producing inorganic pyrophosphate. tRNA 3'-terminal CCA addition is required both for tRNA processing and repair. Also involved in tRNA surveillance by mediating tandem CCA addition to generate a CCACCA at the 3' terminus of unstable tRNAs. While stable tRNAs receive only 3'-terminal CCA, unstable tRNAs are marked with CCACCA and rapidly degraded. In Streptococcus pneumoniae (strain CGSP14), this protein is CCA-adding enzyme.